The chain runs to 366 residues: 2-oxoglutarate synthase subunit KorA (366 aa).

Heterotetramer of the KorA, KorB, KorC and KorD subunits.

It carries out the reaction 2 oxidized [2Fe-2S]-[ferredoxin] + 2-oxoglutarate + CoA = succinyl-CoA + 2 reduced [2Fe-2S]-[ferredoxin] + CO2 + H(+). The protein is 2-oxoglutarate synthase subunit KorA (korA) of Methanocaldococcus jannaschii (strain ATCC 43067 / DSM 2661 / JAL-1 / JCM 10045 / NBRC 100440) (Methanococcus jannaschii).